Consider the following 376-residue polypeptide: Zinc transporter 7 (376 aa).

The Cytoplasmic portion of the chain corresponds to 1–37 (MLPLSIKDDEYKPPKFNLFGKISGWFRSILSDKTSRN). The helical transmembrane segment at 38 to 58 (LFFFLCLNLSFAFVELLYGIW) threads the bilayer. At 59–67 (SNCLGLISD) the chain is on the lumenal side. Residues 68-88 (SFHMFFDSTAILAGLAASVIS) traverse the membrane as a helical segment. Residues 89-102 (KWRDNDAFSYGYVR) are Cytoplasmic-facing. A helical transmembrane segment spans residues 103-123 (AEVLAGFVNGLFLIFTAFFIF). The Lumenal portion of the chain corresponds to 124–140 (SEGVERALAPPDVHHER). The helical transmembrane segment at 141-161 (LLLVSILGFVVNLIGIFVFKH) threads the bilayer. Residues 161–218 (HGGHGHSHGSGHGHSHSLFNGALDQAHGHVDHCHSHEVKHGAAHSHDHAHGHGHFHSH) form a his-rich loop region. At 162 to 236 (GGHGHSHGSG…TGPSRQILQG (75 aa)) the chain is on the cytoplasmic side. A compositionally biased stretch (basic and acidic residues) spans 194-222 (HSHEVKHGAAHSHDHAHGHGHFHSHDGPS). Residues 194–226 (HSHEVKHGAAHSHDHAHGHGHFHSHDGPSLKET) form a disordered region. The chain crosses the membrane as a helical span at residues 237–257 (VFLHILADTLGSIGVIASAIM). Residues 258–262 (MQNFG) lie on the Lumenal side of the membrane. Residues 263-283 (LMIADPICSILIAILIVVSVI) form a helical membrane-spanning segment. Topologically, residues 284–376 (PLLRESVGIL…LYVQIDFAAM (93 aa)) are cytoplasmic.

Belongs to the cation diffusion facilitator (CDF) transporter (TC 2.A.4) family. SLC30A subfamily. As to quaternary structure, homooligomer. Highly expressed in megakaryocytes and other bone marrow cells and in the epithelium of the small intestine. Expressed in testis (in Leydig cells), adrenal gland (in adrenal medula, zona fasciculata and zona of reticularis), and pituitary gland (in somatotropic cells).

It is found in the golgi apparatus membrane. The protein localises to the cytoplasmic vesicle. The protein resides in the golgi apparatus. Its subcellular location is the trans-Golgi network. It localises to the sarcoplasmic reticulum. It is found in the mitochondrion. It catalyses the reaction Zn(2+)(in) = Zn(2+)(out). Functionally, zinc ion transporter mediating zinc entry from the cytosol into the lumen of organelles along the secretory pathway. By contributing to zinc ion homeostasis within the early secretory pathway, regulates the activation and folding of enzymes like alkaline phosphatases. This is Zinc transporter 7 from Homo sapiens (Human).